The sequence spans 392 residues: Pannexin-3 (392 aa).

Topologically, residues 1–39 are cytoplasmic; sequence MSLAHTAAEYMLSDALLPDRRGSRLKGLRLELPLDKMVK. A helical membrane pass occupies residues 40 to 60; that stretch reads FVTVGFPLLLMSLAFAQEFSS. Residues 61–113 are Extracellular-facing; sequence GSPISCFSPSNFSVRQAVFVDSSCWDSLAHYKQDEAGQYTVKSLWPHKALPYS. The N-linked (GlcNAc...) asparagine glycan is linked to Asn71. Residues 114-134 traverse the membrane as a helical segment; the sequence is LLALAVAMYLPVLLWQYAAVP. Residues 135 to 215 lie on the Cytoplasmic side of the membrane; sequence ALSSDLLFII…VATYLLRNAL (81 aa). The chain crosses the membrane as a helical span at residues 216–236; it reads LLLFTSATYLYLGHFHLDVFF. Topologically, residues 237–267 are extracellular; the sequence is QEEFSCSIKTGLLHEETHVPELITCRLTSLS. A helical membrane pass occupies residues 268–288; sequence VFQIVSVSSVAIYTVLVPVII. Residues 289-392 lie on the Cytoplasmic side of the membrane; that stretch reads YNLTRLCRWD…LTQHTYDEHP (104 aa).

The protein belongs to the pannexin family. Homoheptameric. As to expression, skin.

The protein resides in the cell membrane. The protein localises to the cell junction. Its subcellular location is the gap junction. It is found in the endoplasmic reticulum membrane. The catalysed reaction is Ca(2+)(in) = Ca(2+)(out). The enzyme catalyses ATP(in) = ATP(out). Regulator of osteoblast differentiation by functionning as a Ca(2+) channel in the endoplasmic reticulum which regulates calmodulin (CaM) pathways. Allows ATP release into the extracellular space and activation or purinergic receptors. The polypeptide is Pannexin-3 (Panx3) (Rattus norvegicus (Rat)).